Reading from the N-terminus, the 398-residue chain is MNSLDFDRKPEDTRVVVAMSGGVDSSVVAGLLKREGYDVLGITLQLYDHGAAVHRAGSCCAGQDIDDARRVCETLGIPHYVLDYEARFRETVINPFAESYIAGETPIPCVACNQTVKFADLLATAKELGADALATGHYIRSRPSPKPRYQGQRALYRPTDAERDQSYFLFATTQEQIDYLRFPLGNLSKPETRALAEEMGLVVAKKADSQDICFVPQGKYSDIVSKLKPNAALGGEIVHLDGRVLGTHEGILHYTIGQRRGIGVATGEPLYVVYLDARSRRVIVGPKEALETRRVYLRDVNWLGDEEIDAAASRGFACFAKVRSTRQPAPAEMKCDADGIYVELVDGEAGVAPGQACALYSGTGEDARVYGGGFIRKSEREPAAEAALQALLQAPAAA.

ATP is bound by residues 18-25 and Leu44; that span reads AMSGGVDS. The active-site Nucleophile is the Cys112. Cys112 and Cys213 are oxidised to a cystine. Residue Gly136 coordinates ATP. The segment at 163–165 is interaction with tRNA; the sequence is RDQ. Cys213 acts as the Cysteine persulfide intermediate in catalysis.

Belongs to the MnmA/TRMU family.

Its subcellular location is the cytoplasm. It catalyses the reaction S-sulfanyl-L-cysteinyl-[protein] + uridine(34) in tRNA + AH2 + ATP = 2-thiouridine(34) in tRNA + L-cysteinyl-[protein] + A + AMP + diphosphate + H(+). Functionally, catalyzes the 2-thiolation of uridine at the wobble position (U34) of tRNA, leading to the formation of s(2)U34. The polypeptide is tRNA-specific 2-thiouridylase MnmA (Sinorhizobium fredii (strain NBRC 101917 / NGR234)).